Here is a 388-residue protein sequence, read N- to C-terminus: Quinolone resistance protein NorA (388 aa).

The next 12 helical transmembrane spans lie at 5–25 (IFVL…VIPV), 42–62 (LLVA…GTLA), 69–89 (LIIC…AVGH), 99–119 (VIGG…IADI), 129–149 (FGYM…IGGF), 157–177 (MPFY…IVLI), 201–221 (WKVF…LSAF), 239–259 (DISI…IYFF), 269–289 (LTFI…LVFA), 293–313 (WSIM…RPAI), 331–351 (LNST…GALF), and 355–375 (IEAP…IVLI).

The protein belongs to the major facilitator superfamily. TCR/Tet family.

It is found in the cell membrane. Functionally, involved in quinolone resistance. May constitute a membrane-associated active efflux pump of hydrophilic quinolones. This is Quinolone resistance protein NorA (norA) from Staphylococcus aureus (strain MSSA476).